Here is a 473-residue protein sequence, read N- to C-terminus: PTS system trehalose-specific EIIBC component (473 aa).

In terms of domain architecture, PTS EIIB type-1 spans 1-89; it reads MMSKINQTDI…IASTGQAQVD (89 aa). The Cytoplasmic segment spans residues 1–110; sequence MMSKINQTDI…MKWHEQLISH (110 aa). C29 functions as the Phosphocysteine intermediate; for EIIB activity in the catalytic mechanism. C29 is modified (phosphocysteine; by EIIA). The 365-residue stretch at 109 to 473 folds into the PTS EIIC type-1 domain; sequence SHFAVIFFPL…KYRLGTLDIV (365 aa). Residues 111-131 traverse the membrane as a helical segment; that stretch reads FAVIFFPLLPALISGGLILGF. Residues 132–158 are Periplasmic-facing; it reads RNVIGDLPMSNGQTLAQMYPSLQTIYD. The helical transmembrane segment at 159 to 179 threads the bilayer; the sequence is FLWLIGEAIFFYLPVGICWSA. Topologically, residues 180–187 are cytoplasmic; that stretch reads VKKMGGTP. Residues 188-208 traverse the membrane as a helical segment; the sequence is ILGIVLGVTLVSPQLMNAYLL. Residues 209–225 are Periplasmic-facing; it reads GQQLPEVWDFGMFSIAK. The helical transmembrane segment at 226–246 threads the bilayer; it reads VGYQAQVIPALLAGLALGVIE. Over 247-258 the chain is Cytoplasmic; it reads TRLKRIVPDYLY. Residues 259-279 traverse the membrane as a helical segment; that stretch reads LVVVPVCSLILAVFLAHALIG. The Periplasmic portion of the chain corresponds to 280-300; the sequence is PFGRMIGDGVAFAVRHLMTGS. A helical membrane pass occupies residues 301–321; sequence FAPIGAALFGFLYAPLVITGV. At 322–340 the chain is on the cytoplasmic side; the sequence is HQTTLAIDLQMIQSMGGTP. A helical transmembrane segment spans residues 341–361; that stretch reads VWPLIALSNIAQGSAVIGIII. The Periplasmic portion of the chain corresponds to 362–370; it reads SSRKHNERE. Residues 371–391 traverse the membrane as a helical segment; the sequence is ISVPAAISAWLGVTEPAMYGI. The Cytoplasmic portion of the chain corresponds to 392-398; the sequence is NLKYRFP. A helical membrane pass occupies residues 399–419; it reads MLCAMIGSGLAGLLCGLNGVM. The Periplasmic portion of the chain corresponds to 420-440; that stretch reads ANGIGVGGLPGILSIQPSYWQ. A helical transmembrane segment spans residues 441–461; that stretch reads VFALAMAIAIIIPIVLTSFIY. At 462 to 473 the chain is on the cytoplasmic side; the sequence is QRKYRLGTLDIV.

It is found in the cell inner membrane. It catalyses the reaction alpha,alpha-trehalose(out) + N(pros)-phospho-L-histidyl-[protein] = alpha,alpha-trehalose 6-phosphate(in) + L-histidyl-[protein]. In terms of biological role, the phosphoenolpyruvate-dependent sugar phosphotransferase system (sugar PTS), a major carbohydrate active transport system, catalyzes the phosphorylation of incoming sugar substrates concomitantly with their translocation across the cell membrane. This system is involved in trehalose transport at low osmolarity. This is PTS system trehalose-specific EIIBC component (treB) from Escherichia coli (strain K12).